Consider the following 624-residue polypeptide: DNA damage response protein Mdb1 (624 aa).

Disordered regions lie at residues Glu-177 to Ser-237, Gly-249 to His-386, and Ile-591 to Thr-624. Composition is skewed to basic and acidic residues over residues Asp-200 to Asp-217 and Glu-225 to Asp-235. Residues Glu-250 to Gly-263 are compositionally biased toward polar residues. Phosphoserine occurs at positions 253 and 283. A compositionally biased stretch (low complexity) spans Asn-294–Ile-305. Composition is skewed to basic and acidic residues over residues His-306 to Pro-316 and Glu-325 to Glu-352. The segment covering Ile-356–His-386 has biased composition (polar residues). Residues Gln-376 to Tyr-468 enclose the BRCT domain.

Homodimer. Interacts (via BRCT domain) with hta1 peptide containing the S/T-Q motif in vitro; this interaction requires phosphorylation of the hta1 peptide at the S/T-Q motif.

Its subcellular location is the nucleus. It localises to the chromosome. The protein resides in the cytoplasm. The protein localises to the cytoskeleton. It is found in the spindle. Its function is as follows. Involved in DNA damage response (DDR) mediated through its interaction with phosphorylated H2A proteins hta1 and hta2 which mark the discrete foci of DNA damage. In Schizosaccharomyces pombe (strain 972 / ATCC 24843) (Fission yeast), this protein is DNA damage response protein Mdb1.